The primary structure comprises 603 residues: MSDRLTRIAIVSEDRCKPKKCRQECKKSCPVVKTGKLCIEVGSTSKSAFISEELCIGCGICVKKCPFEAIQIINLPKDLAKDTTHRYGANGFKLHRLPIPRPGQVLGLVGTNGIGKSTALKILAGKLKPNLGRFNTPPDWEEILTHFRGSELQSYFIRVVEENLKTAIKPQHVDYIKEVVRGNLGKMLEKLDERGLMEEICADMELNQVLEREARQVSGGELQRFAIAAVFVKKADIYMFDEPSSYLDVRQRLKAAQVIRSLLRHDSYVIVVEHDLSVLDYLSDFVCCLYGKPGAYGVVTLPFSVREGINVFLAGFIPTENLRFRDESLTFRVSETTQENDGEVKSYARYKYPNMTKQLGDFKLEVMEGEFTDSQIIVMLGENGTGKTTFIRMLAGAFPREEGVQSEIPEFNVSYKPQGNDSKRECTVRQLLHDKIRDACAHPQFMSDVIRPLQIEQLMDQVVKTLSGGEKQRVAITLCLGKPADIYLIDEPSAHLDSEQRITASKVIKRFILHAKKTAFIVEHDFIMATYLADRVIVYEGQPAVKCIAHSPQSLLSGMNHFLSHLNITFRRDPTNFRPRINKLESIKDKEQKTAGSYYYLDD.

2 consecutive 4Fe-4S ferredoxin-type domains span residues 7-39 (RIAIVSEDRCKPKKCRQECKKSCPVVKTGKLCI) and 46-75 (KSAFISEELCIGCGICVKKCPFEAIQIINL). ABC transporter domains are found at residues 70 to 315 (IQII…FLAG) and 344 to 566 (VKSY…LSHL). ATP is bound by residues 110 to 117 (GTNGIGKS) and 381 to 388 (GENGTGKT).

The protein belongs to the ABC transporter superfamily. ABCE family. Expressed in roots, stems, leaves, flowers and siliques.

Its subcellular location is the membrane. This is ABC transporter E family member 1 (ABCE1) from Arabidopsis thaliana (Mouse-ear cress).